A 368-amino-acid polypeptide reads, in one-letter code: tRNA-specific 2-thiouridylase MnmA (368 aa).

ATP is bound by residues 11–18 (GMSGGVDS) and Met-37. Residues 97–99 (NPD) form an interaction with target base in tRNA region. Cys-102 acts as the Nucleophile in catalysis. A disulfide bridge connects residues Cys-102 and Cys-199. Gly-127 provides a ligand contact to ATP. Residues 149-151 (KDQ) form an interaction with tRNA region. Catalysis depends on Cys-199, which acts as the Cysteine persulfide intermediate. An interaction with tRNA region spans residues 311 to 312 (RY).

It belongs to the MnmA/TRMU family. Interacts with TusE.

It is found in the cytoplasm. It catalyses the reaction S-sulfanyl-L-cysteinyl-[protein] + uridine(34) in tRNA + AH2 + ATP = 2-thiouridine(34) in tRNA + L-cysteinyl-[protein] + A + AMP + diphosphate + H(+). Catalyzes the 2-thiolation of uridine at the wobble position (U34) of tRNA(Lys), tRNA(Glu) and tRNA(Gln), leading to the formation of s(2)U34, the first step of tRNA-mnm(5)s(2)U34 synthesis. Sulfur is provided by IscS, via a sulfur-relay system. Binds ATP and its substrate tRNAs. The protein is tRNA-specific 2-thiouridylase MnmA of Shigella boydii serotype 4 (strain Sb227).